We begin with the raw amino-acid sequence, 402 residues long: 4-hydroxy-3-methylbut-2-enyl diphosphate reductase (402 aa).

Cys66 lines the [4Fe-4S] cluster pocket. His96 contacts (2E)-4-hydroxy-3-methylbut-2-enyl diphosphate. Residue His96 participates in dimethylallyl diphosphate binding. His96 provides a ligand contact to isopentenyl diphosphate. Cys157 serves as a coordination point for [4Fe-4S] cluster. A (2E)-4-hydroxy-3-methylbut-2-enyl diphosphate-binding site is contributed by His185. His185 is a dimethylallyl diphosphate binding site. Position 185 (His185) interacts with isopentenyl diphosphate. Catalysis depends on Glu187, which acts as the Proton donor. Residue Thr250 participates in (2E)-4-hydroxy-3-methylbut-2-enyl diphosphate binding. Cys288 serves as a coordination point for [4Fe-4S] cluster. Ser317, Ser318, Asn319, and Ser379 together coordinate (2E)-4-hydroxy-3-methylbut-2-enyl diphosphate. Residues Ser317, Ser318, Asn319, and Ser379 each contribute to the dimethylallyl diphosphate site. 4 residues coordinate isopentenyl diphosphate: Ser317, Ser318, Asn319, and Ser379.

Belongs to the IspH family. [4Fe-4S] cluster serves as cofactor.

The enzyme catalyses isopentenyl diphosphate + 2 oxidized [2Fe-2S]-[ferredoxin] + H2O = (2E)-4-hydroxy-3-methylbut-2-enyl diphosphate + 2 reduced [2Fe-2S]-[ferredoxin] + 2 H(+). The catalysed reaction is dimethylallyl diphosphate + 2 oxidized [2Fe-2S]-[ferredoxin] + H2O = (2E)-4-hydroxy-3-methylbut-2-enyl diphosphate + 2 reduced [2Fe-2S]-[ferredoxin] + 2 H(+). It functions in the pathway isoprenoid biosynthesis; dimethylallyl diphosphate biosynthesis; dimethylallyl diphosphate from (2E)-4-hydroxy-3-methylbutenyl diphosphate: step 1/1. Its pathway is isoprenoid biosynthesis; isopentenyl diphosphate biosynthesis via DXP pathway; isopentenyl diphosphate from 1-deoxy-D-xylulose 5-phosphate: step 6/6. Catalyzes the conversion of 1-hydroxy-2-methyl-2-(E)-butenyl 4-diphosphate (HMBPP) into a mixture of isopentenyl diphosphate (IPP) and dimethylallyl diphosphate (DMAPP). Acts in the terminal step of the DOXP/MEP pathway for isoprenoid precursor biosynthesis. In Thermosynechococcus vestitus (strain NIES-2133 / IAM M-273 / BP-1), this protein is 4-hydroxy-3-methylbut-2-enyl diphosphate reductase.